An 800-amino-acid chain; its full sequence is Transducin beta-like protein 3 (800 aa).

Ala-2 carries the N-acetylalanine modification. WD repeat units follow at residues 64–105 (EDQE…RLWK), 107–146 (IHTA…GTHH), 149–190 (GSPG…CLAV), 193–232 (AHYS…TSRT), 245–284 (LPEE…CVYT), 290–329 (GLRQ…LQKQ), 332–372 (GYSE…CQIL), 374–413 (GHTD…QVAC), 419–459 (GHTH…PSKN), 477–516 (CHDK…LLGV), 519–560 (GHRR…KTFE), 562–602 (HDAS…RTLD), and 604–642 (HEDK…EQAE). Lys-407 participates in a covalent cross-link: Glycyl lysine isopeptide (Lys-Gly) (interchain with G-Cter in SUMO2).

As to quaternary structure, part of the small subunit (SSU) processome, composed of more than 70 proteins and the RNA chaperone small nucleolar RNA (snoRNA) U3.

The protein resides in the nucleus. The protein localises to the nucleolus. Functionally, part of the small subunit (SSU) processome, first precursor of the small eukaryotic ribosomal subunit. During the assembly of the SSU processome in the nucleolus, many ribosome biogenesis factors, an RNA chaperone and ribosomal proteins associate with the nascent pre-rRNA and work in concert to generate RNA folding, modifications, rearrangements and cleavage as well as targeted degradation of pre-ribosomal RNA by the RNA exosome. This chain is Transducin beta-like protein 3 (Tbl3), found in Rattus norvegicus (Rat).